A 509-amino-acid polypeptide reads, in one-letter code: ATP synthase subunit alpha (509 aa).

An ATP-binding site is contributed by 169-176 (GDRQTGKT).

It belongs to the ATPase alpha/beta chains family. F-type ATPases have 2 components, CF(1) - the catalytic core - and CF(0) - the membrane proton channel. CF(1) has five subunits: alpha(3), beta(3), gamma(1), delta(1), epsilon(1). CF(0) has three main subunits: a(1), b(2) and c(9-12). The alpha and beta chains form an alternating ring which encloses part of the gamma chain. CF(1) is attached to CF(0) by a central stalk formed by the gamma and epsilon chains, while a peripheral stalk is formed by the delta and b chains.

The protein localises to the cell inner membrane. The catalysed reaction is ATP + H2O + 4 H(+)(in) = ADP + phosphate + 5 H(+)(out). Functionally, produces ATP from ADP in the presence of a proton gradient across the membrane. The alpha chain is a regulatory subunit. In Sinorhizobium medicae (strain WSM419) (Ensifer medicae), this protein is ATP synthase subunit alpha.